A 196-amino-acid polypeptide reads, in one-letter code: Pyridoxal 5'-phosphate synthase subunit PdxT (196 aa).

Gly-47 to Ser-49 provides a ligand contact to L-glutamine. Cys-79 functions as the Nucleophile in the catalytic mechanism. Residues Arg-106 and Ile-134–Arg-135 each bind L-glutamine. Catalysis depends on charge relay system residues His-170 and Glu-172.

The protein belongs to the glutaminase PdxT/SNO family. In terms of assembly, in the presence of PdxS, forms a dodecamer of heterodimers. Only shows activity in the heterodimer.

The catalysed reaction is aldehydo-D-ribose 5-phosphate + D-glyceraldehyde 3-phosphate + L-glutamine = pyridoxal 5'-phosphate + L-glutamate + phosphate + 3 H2O + H(+). It carries out the reaction L-glutamine + H2O = L-glutamate + NH4(+). The protein operates within cofactor biosynthesis; pyridoxal 5'-phosphate biosynthesis. Catalyzes the hydrolysis of glutamine to glutamate and ammonia as part of the biosynthesis of pyridoxal 5'-phosphate. The resulting ammonia molecule is channeled to the active site of PdxS. The polypeptide is Pyridoxal 5'-phosphate synthase subunit PdxT (Bacillus mycoides (strain KBAB4) (Bacillus weihenstephanensis)).